Here is a 426-residue protein sequence, read N- to C-terminus: 3',5'-cyclic-nucleotide phosphodiesterase (426 aa).

The tract at residues 210 to 229 is disordered; the sequence is DKEDAQHHSNSNSNSNNIWG.

Belongs to the cyclic nucleotide phosphodiesterase class-II family.

It carries out the reaction a nucleoside 3',5'-cyclic phosphate + H2O = a nucleoside 5'-phosphate + H(+). In Candida albicans (Yeast), this protein is 3',5'-cyclic-nucleotide phosphodiesterase (PDE1).